A 174-amino-acid polypeptide reads, in one-letter code: Zinc finger AN1 domain-containing stress-associated protein 15 (174 aa).

The tract at residues 1 to 61 (MAQESCDLNK…TPPAAAAAAS (61 aa)) is disordered. A compositionally biased stretch (low complexity) spans 18–41 (PSSSSSPSPSPTTASPSPPTAQMT). Residues 42–54 (EPPPPQSTPPTPP) are compositionally biased toward pro residues. The segment at 109-155 (VLFVNRCNVCRKRVGLTGFRCRCGELFCPRHRHSETHECSFDYKTAG) adopts an AN1-type zinc-finger fold. Zn(2+) contacts are provided by Cys115, Cys118, Cys129, Cys131, Cys136, His139, His145, and Cys147.

May be involved in environmental stress response. This is Zinc finger AN1 domain-containing stress-associated protein 15 (SAP15) from Oryza sativa subsp. japonica (Rice).